Consider the following 165-residue polypeptide: LOB domain-containing protein 3 (165 aa).

One can recognise an LOB domain in the interval 13-115; it reads SPCAGCKLLR…TQLAFAQAEL (103 aa).

This sequence belongs to the LOB domain-containing protein family. Expressed in young shoots, roots, stems, leaves and flowers. At the bases of lateral organs formed from vegetative, inflorescence, and floral meristems.

It is found in the nucleus. This is LOB domain-containing protein 3 (LBD3) from Arabidopsis thaliana (Mouse-ear cress).